A 162-amino-acid chain; its full sequence is Shikimate kinase (162 aa).

11–16 is an ATP binding site; sequence GSGKSS. Ser-15 contacts Mg(2+). Residues Asp-33, Arg-57, and Gly-80 each coordinate substrate. Arg-116 serves as a coordination point for ATP. Arg-132 contacts substrate.

Belongs to the shikimate kinase family. As to quaternary structure, monomer. It depends on Mg(2+) as a cofactor.

It localises to the cytoplasm. It carries out the reaction shikimate + ATP = 3-phosphoshikimate + ADP + H(+). It functions in the pathway metabolic intermediate biosynthesis; chorismate biosynthesis; chorismate from D-erythrose 4-phosphate and phosphoenolpyruvate: step 5/7. Its function is as follows. Catalyzes the specific phosphorylation of the 3-hydroxyl group of shikimic acid using ATP as a cosubstrate. The sequence is that of Shikimate kinase from Helicobacter pylori (strain HPAG1).